The chain runs to 546 residues: NAD(P)H-quinone oxidoreductase chain 4 (546 aa).

14 consecutive transmembrane segments (helical) span residues 24 to 44 (FPWL…IPFF), 56 to 76 (FALS…INGF), 106 to 126 (ISMP…LAAW), 132 to 152 (PKLF…VFAV), 156 to 176 (LLFF…LAIW), 188 to 208 (FIIY…AMGF), 232 to 252 (ILCY…VPLH), 263 to 283 (TAPV…YALL), 297 to 317 (FAPL…LTSF), 326 to 346 (IAYS…SFSS), 352 to 372 (AMLQ…LVGA), 396 to 416 (FALW…SGFV), 437 to 457 (VVMA…LLSM), and 484 to 504 (VYII…PRLV).

It belongs to the complex I subunit 4 family.

Its subcellular location is the cellular thylakoid membrane. The enzyme catalyses a plastoquinone + NADH + (n+1) H(+)(in) = a plastoquinol + NAD(+) + n H(+)(out). The catalysed reaction is a plastoquinone + NADPH + (n+1) H(+)(in) = a plastoquinol + NADP(+) + n H(+)(out). NDH-1 shuttles electrons from NAD(P)H, via FMN and iron-sulfur (Fe-S) centers, to quinones in the respiratory chain. The immediate electron acceptor for the enzyme in this species is believed to be plastoquinone. Couples the redox reaction to proton translocation (for every two electrons transferred, four hydrogen ions are translocated across the cytoplasmic membrane), and thus conserves the redox energy in a proton gradient. In Prochlorococcus marinus (strain MIT 9515), this protein is NAD(P)H-quinone oxidoreductase chain 4.